A 1379-amino-acid chain; its full sequence is DNA-directed RNA polymerase subunit beta'' (1379 aa).

Cys220, Cys293, Cys300, and Cys303 together coordinate Zn(2+).

This sequence belongs to the RNA polymerase beta' chain family. RpoC2 subfamily. In terms of assembly, in plastids the minimal PEP RNA polymerase catalytic core is composed of four subunits: alpha, beta, beta', and beta''. When a (nuclear-encoded) sigma factor is associated with the core the holoenzyme is formed, which can initiate transcription. Requires Zn(2+) as cofactor.

It localises to the plastid. Its subcellular location is the chloroplast. The catalysed reaction is RNA(n) + a ribonucleoside 5'-triphosphate = RNA(n+1) + diphosphate. In terms of biological role, DNA-dependent RNA polymerase catalyzes the transcription of DNA into RNA using the four ribonucleoside triphosphates as substrates. In Barbarea verna (Land cress), this protein is DNA-directed RNA polymerase subunit beta''.